Here is a 195-residue protein sequence, read N- to C-terminus: Small ribosomal subunit protein eS7 (195 aa).

A phosphothreonine mark is found at threonine 146 and threonine 151. A phosphoserine mark is found at serine 172 and serine 173.

Belongs to the eukaryotic ribosomal protein eS7 family. Component of the small ribosomal subunit (SSU). Mature yeast ribosomes consist of a small (40S) and a large (60S) subunit. The 40S small subunit contains 1 molecule of ribosomal RNA (18S rRNA) and at least 33 different proteins. The large 60S subunit contains 3 rRNA molecules (25S, 5.8S and 5S rRNA) and at least 46 different proteins. Interacts with snoRNA U3. uS11 interacts with MPP10. Component of the ribosomal small subunit (SSU) processome composed of at least 40 protein subunits and snoRNA U3.

The protein resides in the cytoplasm. Its subcellular location is the nucleus. It is found in the nucleolus. Functionally, component of the ribosome, a large ribonucleoprotein complex responsible for the synthesis of proteins in the cell. The small ribosomal subunit (SSU) binds messenger RNAs (mRNAs) and translates the encoded message by selecting cognate aminoacyl-transfer RNA (tRNA) molecules. The large subunit (LSU) contains the ribosomal catalytic site termed the peptidyl transferase center (PTC), which catalyzes the formation of peptide bonds, thereby polymerizing the amino acids delivered by tRNAs into a polypeptide chain. The nascent polypeptides leave the ribosome through a tunnel in the LSU and interact with protein factors that function in enzymatic processing, targeting, and the membrane insertion of nascent chains at the exit of the ribosomal tunnel. eS7 is involved in nucleolar processing of pre-18S ribosomal RNA and ribosome assembly. The chain is Small ribosomal subunit protein eS7 (rps7) from Schizosaccharomyces pombe (strain 972 / ATCC 24843) (Fission yeast).